A 468-amino-acid chain; its full sequence is Protein phosphatase ppm-1.A (468 aa).

The tract at residues 1–23 (MTISRADLQIASSAEPKTHGNLN) is disordered. The PPM-type phosphatase domain maps to 106–381 (RYGMSSMQGW…DNMTMVVVCF (276 aa)). Mn(2+) is bound by residues aspartate 145, glycine 146, aspartate 329, and aspartate 372.

This sequence belongs to the PP2C family. Mg(2+) is required as a cofactor. Requires Mn(2+) as cofactor. In terms of tissue distribution, expressed in neurons of the nerve ring and motor neurons of the ventral nerve cord.

Its subcellular location is the synapse. The catalysed reaction is O-phospho-L-seryl-[protein] + H2O = L-seryl-[protein] + phosphate. The enzyme catalyses O-phospho-L-threonyl-[protein] + H2O = L-threonyl-[protein] + phosphate. In terms of biological role, probable phosphatase which regulates axon termination in ALM and PLM neurons, and synaptic branch extension and/or stabilization in PLM neurons. Plays a role in synapse formation in GABAergic DD motor neurons probably by dephosphorylating pmk-3 thereby negatively regulating a MAP kinase pathway that includes dlk-1, mkk-4 and pmk-3. The sequence is that of Protein phosphatase ppm-1.A from Caenorhabditis elegans.